Reading from the N-terminus, the 314-residue chain is Serine hydrolase-like protein 2 (314 aa).

One can recognise an AB hydrolase-1 domain in the interval 33 to 293 (PPVLCLHGWL…GNHCVHMSEP (261 aa)). Ser108 is a catalytic residue.

The protein belongs to the AB hydrolase superfamily.

Its subcellular location is the cytoplasm. The protein localises to the perinuclear region. It localises to the peroxisome. Probable serine hydrolase. May be related to cell muscle hypertrophy. The chain is Serine hydrolase-like protein 2 (SERHL2) from Homo sapiens (Human).